Consider the following 367-residue polypeptide: Methylthioribose-1-phosphate isomerase (367 aa).

Residues 54–56 (RGA), R91, and Q201 contribute to the substrate site. D242 (proton donor) is an active-site residue. 252-253 (NK) serves as a coordination point for substrate.

This sequence belongs to the eIF-2B alpha/beta/delta subunits family. MtnA subfamily.

It catalyses the reaction 5-(methylsulfanyl)-alpha-D-ribose 1-phosphate = 5-(methylsulfanyl)-D-ribulose 1-phosphate. Its pathway is amino-acid biosynthesis; L-methionine biosynthesis via salvage pathway; L-methionine from S-methyl-5-thio-alpha-D-ribose 1-phosphate: step 1/6. Its function is as follows. Catalyzes the interconversion of methylthioribose-1-phosphate (MTR-1-P) into methylthioribulose-1-phosphate (MTRu-1-P). This is Methylthioribose-1-phosphate isomerase from Acidiphilium cryptum (strain JF-5).